The chain runs to 98 residues: Small ribosomal subunit protein bS20 (98 aa).

Residues 1 to 12 are compositionally biased toward basic residues; the sequence is MAPRKPSKKVGP. The tract at residues 1–31 is disordered; sequence MAPRKPSKKVGPQKRPSAEKRVITSKKKQLR.

This sequence belongs to the bacterial ribosomal protein bS20 family.

Binds directly to 16S ribosomal RNA. This Chlamydia trachomatis serovar A (strain ATCC VR-571B / DSM 19440 / HAR-13) protein is Small ribosomal subunit protein bS20.